The chain runs to 674 residues: Acyl-coenzyme A oxidase acox-1.1 (674 aa).

FAD-binding positions include 149-152, 157-158, and Gly-191; these read YAQT and GT. Substrate-binding positions include 285–288 and Arg-295; that span reads KINY. Residues Arg-320 and 340–343 each bind FAD; that span reads QQHR. The ATP site is built by His-342, Ser-392, His-396, and Gln-404. Position 411 (Gly-411) interacts with FAD. 433–434 is a substrate binding site; the sequence is YE. Glu-434 (proton acceptor) is an active-site residue. Residue Glu-436 coordinates FAD. ATP is bound by residues 533–536 and Tyr-581; that span reads RASR. A Microbody targeting signal motif is present at residues 672 to 674; it reads SKL.

It belongs to the acyl-CoA oxidase family. In terms of assembly, homodimer. Forms a heterodimer with acox-1.2. Forms a heterodimer with acox-1.3; the interaction may be important for the stability of acox-1.3. The cofactor is FAD. As to expression, expressed in hypodermis and intestine.

Its subcellular location is the peroxisome. It carries out the reaction nonanoyl-CoA + O2 = (2E)-nonenoyl-CoA + H2O2. The catalysed reaction is dodecanoyl-CoA + O2 = (2E)-dodecenoyl-CoA + H2O2. It catalyses the reaction a 2,3-saturated acyl-CoA + O2 = a (2E)-enoyl-CoA + H2O2. The enzyme catalyses heptanoyl-CoA + O2 = (2E)-heptenoyl-CoA + H2O2. It carries out the reaction (8R)-8-hydroxynonanoyl-CoA + O2 = (2E,8R)-8-hydroxynonenoyl-CoA + H2O2. The catalysed reaction is pentanoyl-CoA + O2 = (2E)-pentenoyl-CoA + H2O2. It catalyses the reaction hexadecanoyl-CoA + O2 = (2E)-hexadecenoyl-CoA + H2O2. The enzyme catalyses IC-asc-C7-CoA + O2 = IC-asc-DeltaC7-CoA + H2O2. It carries out the reaction IC-asc-C9-CoA + O2 = IC-asc-DeltaC9-CoA + H2O2. The catalysed reaction is asc-omegaC5-CoA + O2 = asc-omegaDeltaC5-CoA + H2O2. It catalyses the reaction asc-C7-CoA + O2 = asc-DeltaC7-CoA + H2O2. The enzyme catalyses asc-omegaC7-CoA + O2 = asc-omegaDeltaC7-CoA + H2O2. It carries out the reaction asc-C9-CoA + O2 = asc-DeltaC9-CoA + H2O2. The catalysed reaction is asc-C13-CoA + O2 = asc-DeltaC13-CoA + H2O2. Its pathway is lipid metabolism; peroxisomal fatty acid beta-oxidation. Its activity is regulated as follows. Activated by ATP. ATP binding leads to a conformational change that promotes FAD cofactor binding and enzyme activity. ATP binding likely occurs during acox-1.1 folding and/or dimer formation. Functionally, involved in the first step of peroxisomal beta-oxidation by catalyzing the desaturation of fatty acid-derived side chains. Specifically, catalyzes the desaturation of fatty acids heptanoyl-CoA (C7), nonanoyl-CoA (C9), dodecanoyl-CoA (C12) and to a lesser extent pentanoyl-CoA (C5) and hexadecanoyl-CoA (C16), and hydroxylated fatty acid hydroxynonanoyl-CoA. Also, catalyzes the desaturation fatty acid-derived side chains of ascaroside pheromones, which regulates development and behavior. Specifically, shortens ascaroside with 5-carbon omega side chain (asc-omega-C5), 7-carbon side chain (asc-C7), 9-carbon side chain (asc-C9), 11-carbon side chain (asc-C11), 13-carbon side chain (asc-C13), 15-carbon side chain (asc-C15) and to a lesser extent ascarosides with 7-omega-carbon side chain (asc-omega-C7). Also shortens indol-3-carbonyl(IC)-ascarosides with 7-carbon side chain (IC-asc-C7) and to a lesser extent (IC)-ascarosides with 9-carbon side chain (IC-asc-C9). May associate and regulate the folding and/or the catalytic activity of other acyl-coenzyme A oxidases including acox-1.2, acox-1.3, acox-1.4 and acox-3 modulating the type of ascarosides produced. In association with acox-1.3, catalyzes the desaturation of asc-C7-CoA but not of fatty acids or hydroxylated fatty acids. Involved in the biosynthesis of asc-C6-MK (daumone 2) and asc-delta-C9 (daumone 3) but not asc-C7 (daumone 1); daumones are pheromones produced during unfavourable growth conditions which promote entry into the dauer stage. The protein is Acyl-coenzyme A oxidase acox-1.1 of Caenorhabditis elegans.